Here is a 470-residue protein sequence, read N- to C-terminus: Sugar transporter ERD6-like 8 (470 aa).

Positions 1–16 (METRKDDMEKRNDKSE) are enriched in basic and acidic residues. The disordered stretch occupies residues 1–24 (METRKDDMEKRNDKSEPLLLPENG). The next 12 membrane-spanning stretches (helical) occupy residues 33 to 53 (WMVY…GTCV), 73 to 93 (QFSV…ITSG), 110 to 130 (VISA…PLDF), 133 to 153 (FLTG…IAEI), 164 to 184 (TLNQ…GAVV), 188 to 208 (TLAL…WFIP), 270 to 290 (FVIV…NGVI), 307 to 327 (GSIL…TLLI), 335 to 355 (LLMA…NSFL), 373 to 393 (GVLV…WVIM), 409 to 429 (VTVV…FLMI), and 434 to 454 (GTFY…AKLV).

The protein belongs to the major facilitator superfamily. Sugar transporter (TC 2.A.1.1) family.

Its subcellular location is the membrane. Its function is as follows. Sugar transporter. The protein is Sugar transporter ERD6-like 8 of Arabidopsis thaliana (Mouse-ear cress).